Reading from the N-terminus, the 389-residue chain is MGKMAAAVASLATLAAEPREDAFRKLFRFYRQSRPGTADLGAVIDFSEAHLARSPKPGVPQVVRFPLNVSSVTERDAERVGLEPVSKWRAYGLEGYPGFIFIPNPFLPGCQRHWVKQCLKLYSQKPNVCNLDKHMTKEETQGLWEQSKEVLRSKEVTKRRPRSLLERLRWVTLGYHYNWDSKKYSADHYTPFPSDLAFLSEQVATACGFQGFQAEAGILNYYRLDSTLGIHVDRSELDHSKPLLSFSFGQSAIFLLGGLKRDEAPTAMFMHSGDIMVMSGFSRLLNHAVPRVLPHPDGECLPHCLETPLPAVLPSNSLVEPCSVEDWQVCATYLRTARVNMTVRQVLATGQDFPLEPVEETKRDIAADGLCHLHDPNSPVKRKRLNPNS.

An interaction with DNAJB6 region spans residues 1–127; that stretch reads MGKMAAAVAS…CLKLYSQKPN (127 aa). Positions 86-389 are tRNA-binding; sequence SKWRAYGLEG…VKRKRLNPNS (304 aa). Substrate contacts are provided by residues tryptophan 144 and 175-177; that span reads YHY. The Fe2OG dioxygenase domain maps to 213–347; it reads QAEAGILNYY…RVNMTVRQVL (135 aa). 220–222 serves as a coordination point for 2-oxoglutarate; sequence NYY. Histidine 231, aspartate 233, and histidine 287 together coordinate Fe cation. Aspartate 233 contacts substrate. 338 to 344 contacts 2-oxoglutarate; that stretch reads RVNMTVR.

In terms of assembly, monomer. Interacts with DNAJB6. Fe(2+) is required as a cofactor. In terms of tissue distribution, in adult organs, highly expressed in testis, eye, brain and kidney.

It is found in the nucleus. The catalysed reaction is an N(6)-methyl-2'-deoxyadenosine in DNA + 2-oxoglutarate + O2 = a 2'-deoxyadenosine in DNA + formaldehyde + succinate + CO2. It catalyses the reaction 2'-deoxyribonucleotide-(2'-deoxyribose 5'-phosphate)-2'-deoxyribonucleotide-DNA = a 3'-end 2'-deoxyribonucleotide-(2,3-dehydro-2,3-deoxyribose 5'-phosphate)-DNA + a 5'-end 5'-phospho-2'-deoxyribonucleoside-DNA + H(+). The enzyme catalyses a methylated nucleobase within DNA + 2-oxoglutarate + O2 = a nucleobase within DNA + formaldehyde + succinate + CO2. It carries out the reaction an N(1)-methyladenosine in tRNA + 2-oxoglutarate + O2 = an adenosine in tRNA + formaldehyde + succinate + CO2. The catalysed reaction is 5-methylcytidine(34) in mitochondrial tRNA(Met) + 2 2-oxoglutarate + 2 O2 = 5-formylcytidine(34) in mitochondrial tRNA(Met) + 2 succinate + 2 CO2 + H2O. It catalyses the reaction an N(3)-methylcytidine in mRNA + 2-oxoglutarate + O2 = a cytidine in mRNA + formaldehyde + succinate + CO2. The enzyme catalyses N(1)-methyladenosine(58) in tRNA + 2-oxoglutarate + O2 = adenosine(58) in tRNA + formaldehyde + succinate + CO2. In terms of biological role, dioxygenase that acts on nucleic acids, such as DNA and tRNA. Requires molecular oxygen, alpha-ketoglutarate and iron. A number of activities have been described for this dioxygenase, but recent results suggest that it mainly acts on tRNAs and mediates their demethylation or oxidation depending on the context and subcellular compartment. Mainly acts as a tRNA demethylase by removing N(1)-methyladenine from various tRNAs, with a preference for N(1)-methyladenine at position 58 (m1A58) present on a stem loop structure of tRNAs. Acts as a regulator of translation initiation and elongation in response to glucose deprivation: regulates both translation initiation, by mediating demethylation of tRNA(Met), and translation elongation, N(1)-methyladenine-containing tRNAs being preferentially recruited to polysomes to promote translation elongation. In mitochondrion, specifically interacts with mt-tRNA(Met) and mediates oxidation of mt-tRNA(Met) methylated at cytosine(34) to form 5-formylcytosine (f(5)c) at this position. mt-tRNA(Met) containing the f(5)c modification at the wobble position enables recognition of the AUA codon in addition to the AUG codon, expanding codon recognition in mitochondrial translation. Specifically demethylates DNA methylated on the 6th position of adenine (N(6)-methyladenosine) DNA. N(6)-methyladenosine (m6A) DNA is present at some L1 elements in embryonic stem cells and probably promotes their silencing. Demethylates mRNAs containing N(3)-methylcytidine modification. Also able to repair alkylated single-stranded DNA by oxidative demethylation, but with low activity. Also has DNA lyase activity and introduces double-stranded breaks at abasic sites: cleaves both single-stranded DNA and double-stranded DNA at abasic sites, with the greatest activity towards double-stranded DNA with two abasic sites. DNA lyase activity does not require alpha-ketoglutarate and iron and leads to the formation of an irreversible covalent protein-DNA adduct with the 5' DNA product. DNA lyase activity is not required during base excision repair and class switch recombination of the immunoglobulin heavy chain during B lymphocyte activation. May play a role in placental trophoblast lineage differentiation. The chain is Nucleic acid dioxygenase ALKBH1 from Mus musculus (Mouse).